The sequence spans 734 residues: Photosystem I P700 chlorophyll a apoprotein A2 (734 aa).

8 consecutive transmembrane segments (helical) span residues 46–69, 135–158, 175–199, 273–291, 330–353, 369–395, 417–439, and 517–535; these read IFAS…FHVA, LYTG…LHLQ, LNHH…HVAI, MAHH…GHMY, LHFQ…QHMY, AALY…IFFI, AIIS…LYVH, and FLVH…LILV. Cys559 and Cys568 together coordinate [4Fe-4S] cluster. Transmembrane regions (helical) follow at residues 575–596 and 643–665; these read AFYL…YWHW and LSVW…MFLI. 3 residues coordinate chlorophyll a: His654, Met662, and Tyr670. Trp671 is a phylloquinone binding site. Residues 707 to 727 form a helical membrane-spanning segment; sequence LVGLAHFSVGYIFTYAAFLIA.

The protein belongs to the PsaA/PsaB family. As to quaternary structure, the PsaA/B heterodimer binds the P700 chlorophyll special pair and subsequent electron acceptors. PSI consists of a core antenna complex that captures photons, and an electron transfer chain that converts photonic excitation into a charge separation. The eukaryotic PSI reaction center is composed of at least 11 subunits. It depends on P700 is a chlorophyll a/chlorophyll a' dimer, A0 is one or more chlorophyll a, A1 is one or both phylloquinones and FX is a shared 4Fe-4S iron-sulfur center. as a cofactor.

Its subcellular location is the plastid. The protein localises to the chloroplast thylakoid membrane. The enzyme catalyses reduced [plastocyanin] + hnu + oxidized [2Fe-2S]-[ferredoxin] = oxidized [plastocyanin] + reduced [2Fe-2S]-[ferredoxin]. Functionally, psaA and PsaB bind P700, the primary electron donor of photosystem I (PSI), as well as the electron acceptors A0, A1 and FX. PSI is a plastocyanin-ferredoxin oxidoreductase, converting photonic excitation into a charge separation, which transfers an electron from the donor P700 chlorophyll pair to the spectroscopically characterized acceptors A0, A1, FX, FA and FB in turn. Oxidized P700 is reduced on the lumenal side of the thylakoid membrane by plastocyanin. The chain is Photosystem I P700 chlorophyll a apoprotein A2 from Spinacia oleracea (Spinach).